A 450-amino-acid chain; its full sequence is Phosphoglucosamine mutase (450 aa).

Residue serine 100 is the Phosphoserine intermediate of the active site. The Mg(2+) site is built by serine 100, aspartate 240, aspartate 242, and aspartate 244. Serine 100 is modified (phosphoserine).

The protein belongs to the phosphohexose mutase family. It depends on Mg(2+) as a cofactor. In terms of processing, activated by phosphorylation.

It carries out the reaction alpha-D-glucosamine 1-phosphate = D-glucosamine 6-phosphate. Catalyzes the conversion of glucosamine-6-phosphate to glucosamine-1-phosphate. This is Phosphoglucosamine mutase from Desulforudis audaxviator (strain MP104C).